The chain runs to 312 residues: Methionyl-tRNA formyltransferase (312 aa).

109-112 (SLLP) lines the (6S)-5,6,7,8-tetrahydrofolate pocket.

The protein belongs to the Fmt family.

The catalysed reaction is L-methionyl-tRNA(fMet) + (6R)-10-formyltetrahydrofolate = N-formyl-L-methionyl-tRNA(fMet) + (6S)-5,6,7,8-tetrahydrofolate + H(+). In terms of biological role, attaches a formyl group to the free amino group of methionyl-tRNA(fMet). The formyl group appears to play a dual role in the initiator identity of N-formylmethionyl-tRNA by promoting its recognition by IF2 and preventing the misappropriation of this tRNA by the elongation apparatus. The protein is Methionyl-tRNA formyltransferase of Anaeromyxobacter sp. (strain K).